Here is a 193-residue protein sequence, read N- to C-terminus: Acyl carrier protein phosphodiesterase (193 aa).

This sequence belongs to the AcpH family.

The enzyme catalyses holo-[ACP] + H2O = apo-[ACP] + (R)-4'-phosphopantetheine + H(+). Converts holo-ACP to apo-ACP by hydrolytic cleavage of the phosphopantetheine prosthetic group from ACP. This chain is Acyl carrier protein phosphodiesterase, found in Yersinia enterocolitica serotype O:8 / biotype 1B (strain NCTC 13174 / 8081).